We begin with the raw amino-acid sequence, 422 residues long: Tyrosine--tRNA ligase (422 aa).

Tyr-37 lines the L-tyrosine pocket. Residues 42–51 (PTEESLHIGH) carry the 'HIGH' region motif. Positions 175 and 179 each coordinate L-tyrosine. Positions 235 to 239 (KFGKT) match the 'KMSKS' region motif. Residue Lys-238 coordinates ATP. In terms of domain architecture, S4 RNA-binding spans 357 to 414 (KDLQEALVLTSLAQSRTQAKNMIISNSISINTEKIRKNHIFHEKDKLFGKFTLLSRGK).

It belongs to the class-I aminoacyl-tRNA synthetase family. TyrS type 1 subfamily. In terms of assembly, homodimer.

It is found in the cytoplasm. The catalysed reaction is tRNA(Tyr) + L-tyrosine + ATP = L-tyrosyl-tRNA(Tyr) + AMP + diphosphate + H(+). Catalyzes the attachment of tyrosine to tRNA(Tyr) in a two-step reaction: tyrosine is first activated by ATP to form Tyr-AMP and then transferred to the acceptor end of tRNA(Tyr). The chain is Tyrosine--tRNA ligase from Buchnera aphidicola subsp. Acyrthosiphon pisum (strain Tuc7).